A 160-amino-acid polypeptide reads, in one-letter code: Major strawberry allergen Fra a 1.05 (160 aa).

The protein belongs to the BetVI family. In terms of processing, phosphorylated in vivo. Phosphorylation prevents its activity as ribonuclease.

In terms of biological role, possesses ribonuclease activity in vitro. The sequence is that of Major strawberry allergen Fra a 1.05 from Fragaria ananassa (Strawberry).